A 382-amino-acid chain; its full sequence is Lipid-A-disaccharide synthase (382 aa).

Belongs to the LpxB family.

The enzyme catalyses 2-N,3-O-bis[(3R)-3-hydroxytetradecanoyl]-alpha-D-glucosaminyl 1-phosphate + UDP-2-N,3-O-bis[(3R)-3-hydroxytetradecanoyl]-alpha-D-glucosamine = lipid A disaccharide (E. coli) + UDP + H(+). It catalyses the reaction a lipid X + a UDP-2-N,3-O-bis[(3R)-3-hydroxyacyl]-alpha-D-glucosamine = a lipid A disaccharide + UDP + H(+). Its pathway is glycolipid biosynthesis; lipid IV(A) biosynthesis; lipid IV(A) from (3R)-3-hydroxytetradecanoyl-[acyl-carrier-protein] and UDP-N-acetyl-alpha-D-glucosamine: step 5/6. Its function is as follows. Condensation of UDP-2,3-diacylglucosamine and 2,3-diacylglucosamine-1-phosphate to form lipid A disaccharide, a precursor of lipid A, a phosphorylated glycolipid that anchors the lipopolysaccharide to the outer membrane of the cell. This is Lipid-A-disaccharide synthase from Citrobacter koseri (strain ATCC BAA-895 / CDC 4225-83 / SGSC4696).